The following is an 87-amino-acid chain: UPF0250 protein KPN78578_06520 (87 aa).

The protein belongs to the UPF0250 family.

The polypeptide is UPF0250 protein KPN78578_06520 (Klebsiella pneumoniae subsp. pneumoniae (strain ATCC 700721 / MGH 78578)).